Reading from the N-terminus, the 433-residue chain is Mitochondrial inner membrane magnesium transporter MIT1 (433 aa).

Residues 257–298 adopt a coiled-coil conformation; that stretch reads TNKLLRDMMKIKNNLQKLSNLLNALRTNIEKILNNENDMKNM. Residues 360–380 traverse the membrane as a helical segment; sequence FILLNAKISFSTLLFSISSVV. Residues 381-396 are Extracellular-facing; it reads TSLFGMNLKNFVEDSN. Residues 397 to 417 form a helical membrane-spanning segment; that stretch reads YAFIIVSIFVSVWSIIGIYVT. Topologically, residues 418-433 are mitochondrial matrix; that stretch reads KNINTLLKFFDRYNFR.

Belongs to the CorA metal ion transporter (MIT) (TC 1.A.35) family.

Its subcellular location is the mitochondrion inner membrane. Functionally, mitochondrial inner membrane magnesium transporter required for mitochondrial magnesium homeostasis. Involved in the development of the sporozoite in the mosquito vector midgut. The protein is Mitochondrial inner membrane magnesium transporter MIT1 of Plasmodium berghei (strain Anka).